The chain runs to 245 residues: Carboxymethylenebutenolidase homolog (245 aa).

An N-acetylalanine modification is found at Ala2. Catalysis depends on residues Cys132, Asp179, and His212. Phosphoserine is present on Ser223.

This sequence belongs to the dienelactone hydrolase family.

Its subcellular location is the cytoplasm. The protein localises to the cytosol. In terms of biological role, cysteine hydrolase. This chain is Carboxymethylenebutenolidase homolog (Cmbl), found in Rattus norvegicus (Rat).